Consider the following 275-residue polypeptide: NH(3)-dependent NAD(+) synthetase (275 aa).

47–54 (GISGGQDS) is an ATP binding site. Residue D53 participates in Mg(2+) binding. R141 is a binding site for deamido-NAD(+). T161 is an ATP binding site. E166 provides a ligand contact to Mg(2+). Deamido-NAD(+)-binding residues include K174 and D181. ATP-binding residues include K190 and T212. 261-262 (HK) is a binding site for deamido-NAD(+).

It belongs to the NAD synthetase family. In terms of assembly, homodimer.

It carries out the reaction deamido-NAD(+) + NH4(+) + ATP = AMP + diphosphate + NAD(+) + H(+). It participates in cofactor biosynthesis; NAD(+) biosynthesis; NAD(+) from deamido-NAD(+) (ammonia route): step 1/1. Its function is as follows. Catalyzes the ATP-dependent amidation of deamido-NAD to form NAD. Uses ammonia as a nitrogen source. The protein is NH(3)-dependent NAD(+) synthetase of Lacticaseibacillus casei (strain BL23) (Lactobacillus casei).